The chain runs to 271 residues: Acyl-[acyl-carrier-protein]--UDP-N-acetylglucosamine O-acyltransferase (271 aa).

It belongs to the transferase hexapeptide repeat family. LpxA subfamily. As to quaternary structure, homotrimer.

The protein localises to the cytoplasm. The catalysed reaction is a (3R)-hydroxyacyl-[ACP] + UDP-N-acetyl-alpha-D-glucosamine = a UDP-3-O-[(3R)-3-hydroxyacyl]-N-acetyl-alpha-D-glucosamine + holo-[ACP]. Its pathway is glycolipid biosynthesis; lipid IV(A) biosynthesis; lipid IV(A) from (3R)-3-hydroxytetradecanoyl-[acyl-carrier-protein] and UDP-N-acetyl-alpha-D-glucosamine: step 1/6. Its function is as follows. Involved in the biosynthesis of lipid A, a phosphorylated glycolipid that anchors the lipopolysaccharide to the outer membrane of the cell. The sequence is that of Acyl-[acyl-carrier-protein]--UDP-N-acetylglucosamine O-acyltransferase from Ralstonia nicotianae (strain ATCC BAA-1114 / GMI1000) (Ralstonia solanacearum).